The primary structure comprises 145 residues: Beta sliding clamp (145 aa).

The protein belongs to the beta sliding clamp family. Forms a ring-shaped head-to-tail homodimer around DNA which binds and tethers DNA polymerases and other proteins to the DNA. The DNA replisome complex has a single clamp-loading complex (3 tau and 1 each of delta, delta', psi and chi subunits) which binds 3 Pol III cores (1 core on the leading strand and 2 on the lagging strand) each with a beta sliding clamp dimer. Additional proteins in the replisome are other copies of gamma, psi and chi, Ssb, DNA helicase and RNA primase.

It is found in the cytoplasm. In terms of biological role, confers DNA tethering and processivity to DNA polymerases and other proteins. Acts as a clamp, forming a ring around DNA (a reaction catalyzed by the clamp-loading complex) which diffuses in an ATP-independent manner freely and bidirectionally along dsDNA. Initially characterized for its ability to contact the catalytic subunit of DNA polymerase III (Pol III), a complex, multichain enzyme responsible for most of the replicative synthesis in bacteria; Pol III exhibits 3'-5' exonuclease proofreading activity. The beta chain is required for initiation of replication as well as for processivity of DNA replication. This chain is Beta sliding clamp (dnaN), found in Vibrio harveyi (Beneckea harveyi).